A 609-amino-acid chain; its full sequence is UvrABC system protein C (609 aa).

Residues 15–92 (TGSGVYQMQD…IKQFRPRYNV (78 aa)) enclose the GIY-YIG domain. The 36-residue stretch at 202-237 (DQVIIKLTERMEVASENLVFEEAAHYRDQIRQLRRL) folds into the UVR domain.

Belongs to the UvrC family. As to quaternary structure, interacts with UvrB in an incision complex.

It localises to the cytoplasm. Functionally, the UvrABC repair system catalyzes the recognition and processing of DNA lesions. UvrC both incises the 5' and 3' sides of the lesion. The N-terminal half is responsible for the 3' incision and the C-terminal half is responsible for the 5' incision. The sequence is that of UvrABC system protein C from Coxiella burnetii (strain CbuG_Q212) (Coxiella burnetii (strain Q212)).